We begin with the raw amino-acid sequence, 86 residues long: Large ribosomal subunit protein eL20 (86 aa).

This sequence belongs to the eukaryotic ribosomal protein eL20 family. In terms of assembly, part of the 50S ribosomal subunit. Binds 23S rRNA.

This chain is Large ribosomal subunit protein eL20, found in Sulfolobus acidocaldarius (strain ATCC 33909 / DSM 639 / JCM 8929 / NBRC 15157 / NCIMB 11770).